We begin with the raw amino-acid sequence, 469 residues long: Mitochondrial-processing peptidase subunit beta (469 aa).

His78 lines the Zn(2+) pocket. Glu81 functions as the Proton acceptor in the catalytic mechanism. Zn(2+) contacts are provided by His82 and Glu159.

It belongs to the peptidase M16 family. Heterodimer of alpha and beta subunits, forming the mitochondrial processing protease (MPP) in which subunit alpha is involved in substrate recognition and binding and subunit beta is the catalytic subunit. mppB is probably also part of the cytochrome bc1 complex as a core I protein in the mitochondrial inner membrane. It depends on Zn(2+) as a cofactor.

The protein localises to the mitochondrion inner membrane. It is found in the mitochondrion matrix. It carries out the reaction Release of N-terminal transit peptides from precursor proteins imported into the mitochondrion, typically with Arg in position P2.. Binding to alpha subunit is required for catalytic activity. In terms of biological role, catalytic subunit of the essential mitochondrial processing protease (MPP), which cleaves the mitochondrial sequence off newly imported precursors proteins. Preferentially, cleaves after an arginine at position P2. Plays an essential role in mitochondrial biogenesis. In Dictyostelium discoideum (Social amoeba), this protein is Mitochondrial-processing peptidase subunit beta (mppB).